The sequence spans 335 residues: Solute-binding protein Veis_3954 (335 aa).

A signal peptide spans 1–34 (MPSTRPLPRPSSRSLRRLALGLGLAFGLGATAAA). Residues glutamine 50, glutamate 82, 155–158 (NGFR), arginine 179, and asparagine 219 contribute to the (R)-pantoate site.

This sequence belongs to the bacterial solute-binding protein 7 family. As to quaternary structure, the complex is comprised of an extracytoplasmic solute-binding protein and a heteromeric permease formed by two transmembrane proteins.

Its subcellular location is the periplasm. Solute-binding protein that binds (R)-pantoate and D-erythronate (in vitro). Probably part of a tripartite ATP-independent periplasmic (TRAP) transport system that mediates solute transport into the cytoplasm. This is Solute-binding protein Veis_3954 from Verminephrobacter eiseniae (strain EF01-2).